The chain runs to 417 residues: Serine hydroxymethyltransferase (417 aa).

Residues Leu121 and 125 to 127 (GHL) each bind (6S)-5,6,7,8-tetrahydrofolate. Lys229 is subject to N6-(pyridoxal phosphate)lysine. 355–357 (SPF) contributes to the (6S)-5,6,7,8-tetrahydrofolate binding site.

The protein belongs to the SHMT family. As to quaternary structure, homodimer. Pyridoxal 5'-phosphate is required as a cofactor.

Its subcellular location is the cytoplasm. The enzyme catalyses (6R)-5,10-methylene-5,6,7,8-tetrahydrofolate + glycine + H2O = (6S)-5,6,7,8-tetrahydrofolate + L-serine. The protein operates within one-carbon metabolism; tetrahydrofolate interconversion. It functions in the pathway amino-acid biosynthesis; glycine biosynthesis; glycine from L-serine: step 1/1. In terms of biological role, catalyzes the reversible interconversion of serine and glycine with tetrahydrofolate (THF) serving as the one-carbon carrier. This reaction serves as the major source of one-carbon groups required for the biosynthesis of purines, thymidylate, methionine, and other important biomolecules. Also exhibits THF-independent aldolase activity toward beta-hydroxyamino acids, producing glycine and aldehydes, via a retro-aldol mechanism. The protein is Serine hydroxymethyltransferase of Erwinia tasmaniensis (strain DSM 17950 / CFBP 7177 / CIP 109463 / NCPPB 4357 / Et1/99).